The primary structure comprises 218 residues: Pyrrolidone-carboxylate peptidase 2 (218 aa).

Residues glutamate 83, cysteine 146, and histidine 170 contribute to the active site.

It belongs to the peptidase C15 family. In terms of assembly, homotetramer.

Its subcellular location is the cytoplasm. The catalysed reaction is Release of an N-terminal pyroglutamyl group from a polypeptide, the second amino acid generally not being Pro.. Removes 5-oxoproline from various penultimate amino acid residues except L-proline. The polypeptide is Pyrrolidone-carboxylate peptidase 2 (Photorhabdus laumondii subsp. laumondii (strain DSM 15139 / CIP 105565 / TT01) (Photorhabdus luminescens subsp. laumondii)).